Here is a 29-residue protein sequence, read N- to C-terminus: uncharacterized protein (29 aa).

This is an uncharacterized protein from Saccharomyces cerevisiae (strain ATCC 204508 / S288c) (Baker's yeast).